Here is a 269-residue protein sequence, read N- to C-terminus: Formamidopyrimidine-DNA glycosylase (269 aa).

Catalysis depends on Pro2, which acts as the Schiff-base intermediate with DNA. The active-site Proton donor is the Glu3. The active-site Proton donor; for beta-elimination activity is the Lys57. Positions 90, 109, and 150 each coordinate DNA. The FPG-type zinc finger occupies 235-269; sequence QVYGRKGEPCRVCGTPIVATKHAQRATFYCRQCQK. Catalysis depends on Arg259, which acts as the Proton donor; for delta-elimination activity.

Belongs to the FPG family. Monomer. Requires Zn(2+) as cofactor.

The catalysed reaction is Hydrolysis of DNA containing ring-opened 7-methylguanine residues, releasing 2,6-diamino-4-hydroxy-5-(N-methyl)formamidopyrimidine.. It catalyses the reaction 2'-deoxyribonucleotide-(2'-deoxyribose 5'-phosphate)-2'-deoxyribonucleotide-DNA = a 3'-end 2'-deoxyribonucleotide-(2,3-dehydro-2,3-deoxyribose 5'-phosphate)-DNA + a 5'-end 5'-phospho-2'-deoxyribonucleoside-DNA + H(+). Involved in base excision repair of DNA damaged by oxidation or by mutagenic agents. Acts as a DNA glycosylase that recognizes and removes damaged bases. Has a preference for oxidized purines, such as 7,8-dihydro-8-oxoguanine (8-oxoG). Has AP (apurinic/apyrimidinic) lyase activity and introduces nicks in the DNA strand. Cleaves the DNA backbone by beta-delta elimination to generate a single-strand break at the site of the removed base with both 3'- and 5'-phosphates. The sequence is that of Formamidopyrimidine-DNA glycosylase from Escherichia coli O6:K15:H31 (strain 536 / UPEC).